The following is a 315-amino-acid chain: MKHLVIATRGSKLALWQAEHIKSLIETEHAGKVDVSLKIIKTKGDIILDVPLAKVGGKGLFVKEIEEALLDGSADLAVHSMKDVPMELPEGLFLGCIPEREEPSDTLLSVRYASLDALPHGARVGTSSLRRQSQLLALRPDLDIISLRGNVDTRLRKLMDGEFDAIVMATAGLKRLGLAAPHHEVLAPPRFLPAVGQGALGIEFREDRADLRDMLAFLDHRPTRIRVEAERGFLAGLEGGCQVPIAGHAVMTGDDNFRIEGLVADLKGERVIRRTLEGTGANARNRGLELASQVLADGAAEILDEVYASGAADRQ.

Residue Cys-241 is modified to S-(dipyrrolylmethanemethyl)cysteine.

This sequence belongs to the HMBS family. As to quaternary structure, monomer. Requires dipyrromethane as cofactor.

It carries out the reaction 4 porphobilinogen + H2O = hydroxymethylbilane + 4 NH4(+). It functions in the pathway porphyrin-containing compound metabolism; protoporphyrin-IX biosynthesis; coproporphyrinogen-III from 5-aminolevulinate: step 2/4. Tetrapolymerization of the monopyrrole PBG into the hydroxymethylbilane pre-uroporphyrinogen in several discrete steps. The polypeptide is Porphobilinogen deaminase (Nitratidesulfovibrio vulgaris (strain ATCC 29579 / DSM 644 / CCUG 34227 / NCIMB 8303 / VKM B-1760 / Hildenborough) (Desulfovibrio vulgaris)).